Consider the following 131-residue polypeptide: UPF0102 protein RPD_0400 (131 aa).

The protein belongs to the UPF0102 family.

The chain is UPF0102 protein RPD_0400 from Rhodopseudomonas palustris (strain BisB5).